The primary structure comprises 328 residues: Tetraacyldisaccharide 4'-kinase (328 aa).

An ATP-binding site is contributed by 55–62; that stretch reads TAGGNGKT.

It belongs to the LpxK family.

The catalysed reaction is a lipid A disaccharide + ATP = a lipid IVA + ADP + H(+). Its pathway is glycolipid biosynthesis; lipid IV(A) biosynthesis; lipid IV(A) from (3R)-3-hydroxytetradecanoyl-[acyl-carrier-protein] and UDP-N-acetyl-alpha-D-glucosamine: step 6/6. Transfers the gamma-phosphate of ATP to the 4'-position of a tetraacyldisaccharide 1-phosphate intermediate (termed DS-1-P) to form tetraacyldisaccharide 1,4'-bis-phosphate (lipid IVA). This is Tetraacyldisaccharide 4'-kinase from Shigella dysenteriae serotype 1 (strain Sd197).